Reading from the N-terminus, the 134-residue chain is Profilin-2 (134 aa).

An intrachain disulfide couples Cys-13 to Cys-118. An Involved in PIP2 interaction motif is present at residues 84 to 100 (AVIRGKKGSGGITIKKT). Phosphothreonine is present on Thr-114.

Belongs to the profilin family. In terms of assembly, occurs in many kinds of cells as a complex with monomeric actin in a 1:1 ratio. In terms of processing, phosphorylated by MAP kinases.

The protein localises to the cytoplasm. Its subcellular location is the cytoskeleton. Functionally, binds to actin and affects the structure of the cytoskeleton. At high concentrations, profilin prevents the polymerization of actin, whereas it enhances it at low concentrations. By binding to PIP2, it inhibits the formation of IP3 and DG. The sequence is that of Profilin-2 (PRO2) from Olea europaea (Common olive).